The sequence spans 387 residues: Xylose operon regulatory protein (387 aa).

The region spanning I288–N386 is the HTH araC/xylS-type domain. 2 consecutive DNA-binding regions (H-T-H motif) follow at residues G305–M326 and I353–F376.

In terms of biological role, regulatory protein for the xylBAFGHR operon. This Haemophilus influenzae (strain ATCC 51907 / DSM 11121 / KW20 / Rd) protein is Xylose operon regulatory protein (xylR).